The sequence spans 546 residues: Chaperonin GroEL 1 (546 aa).

Residues 30–33 (TLGP), lysine 51, 87–91 (DGTTT), glycine 415, and aspartate 495 each bind ATP. The disordered stretch occupies residues 527 to 546 (DAAPTAAPGGPGAGGPGFDF). Residues 535 to 546 (GGPGAGGPGFDF) show a composition bias toward gly residues.

Belongs to the chaperonin (HSP60) family. As to quaternary structure, forms a cylinder of 14 subunits composed of two heptameric rings stacked back-to-back. Interacts with the co-chaperonin GroES.

The protein localises to the cytoplasm. It catalyses the reaction ATP + H2O + a folded polypeptide = ADP + phosphate + an unfolded polypeptide.. Together with its co-chaperonin GroES, plays an essential role in assisting protein folding. The GroEL-GroES system forms a nano-cage that allows encapsulation of the non-native substrate proteins and provides a physical environment optimized to promote and accelerate protein folding. The polypeptide is Chaperonin GroEL 1 (Burkholderia lata (strain ATCC 17760 / DSM 23089 / LMG 22485 / NCIMB 9086 / R18194 / 383)).